We begin with the raw amino-acid sequence, 59 residues long: Large ribosomal subunit protein bL35 (59 aa).

Disordered regions lie at residues 1–22 and 30–49; these read MKVK…IKRK and APHK…TVSA. Over residues 30-43 the composition is skewed to basic residues; the sequence is APHKTTKQKRHLRK.

It belongs to the bacterial ribosomal protein bL35 family.

The sequence is that of Large ribosomal subunit protein bL35 (rpmI) from Mycoplasma pneumoniae (strain ATCC 29342 / M129 / Subtype 1) (Mycoplasmoides pneumoniae).